Consider the following 344-residue polypeptide: D-beta-hydroxybutyrate dehydrogenase, mitochondrial (344 aa).

The N-terminal 46 residues, 1-46, are a transit peptide targeting the mitochondrion; sequence MLTARLSRPLSQLPRKTLNFSDRENGTRGSLLLYSAPFVPVGRRTY. 59 to 83 provides a ligand contact to NAD(+); the sequence is LITGCDSGFGFSLAKHLHSEGFLVF. Lys-73 and Lys-97 each carry N6-acetyllysine. Residue Lys-103 is modified to N6-acetyllysine; alternate. Lys-103 carries the post-translational modification N6-succinyllysine; alternate. Position 177 is an N6-acetyllysine (Lys-177). Ser-195 lines the substrate pocket. Residue Tyr-208 is the Proton acceptor of the active site. Lys-212 carries the N6-acetyllysine modification. A glycan (O-linked (GlcNAc) serine) is linked at Ser-219. The residue at position 246 (Ser-246) is a Phosphoserine. An N6-acetyllysine; alternate modification is found at Lys-260. Residue Lys-260 is modified to N6-succinyllysine; alternate. An N6-acetyllysine modification is found at Lys-281.

This sequence belongs to the short-chain dehydrogenases/reductases (SDR) family. Homotetramer.

It localises to the mitochondrion inner membrane. It is found in the mitochondrion matrix. It carries out the reaction (R)-3-hydroxybutanoate + NAD(+) = acetoacetate + NADH + H(+). Requires phosphatidylcholine as an allosteric activator for enzymatic activity. In Bos taurus (Bovine), this protein is D-beta-hydroxybutyrate dehydrogenase, mitochondrial.